We begin with the raw amino-acid sequence, 245 residues long: 14-3-3 protein theta (245 aa).

N-acetylmethionine is present on M1. K3 is modified (N6-acetyllysine). K49 is modified (N6-acetyllysine; alternate). K49 participates in a covalent cross-link: Glycyl lysine isopeptide (Lys-Gly) (interchain with G-Cter in SUMO2); alternate. K68 carries the post-translational modification N6-acetyllysine. Position 82 is a 3'-nitrotyrosine (Y82). S92 is subject to Phosphoserine. The residue at position 104 (Y104) is a 3'-nitrotyrosine. The residue at position 115 (K115) is an N6-acetyllysine. S232 carries the post-translational modification Phosphoserine; by CK1.

This sequence belongs to the 14-3-3 family. In terms of assembly, homodimer. Interacts with CDKN1B ('Thr-198' phosphorylated form); the interaction translocates CDKN1B to the cytoplasm. Interacts with SSH1. Interacts with GAB2. Interacts with RGS7 (phosphorylated form). Interacts with CDK16. Interacts with the 'Ser-241' phosphorylated form of PDPK1. Interacts with the 'Thr-369' phosphorylated form of DAPK2. Interacts with PI4KB, TBC1D22A and TBC1D22B. Interacts with SLITRK1. Interacts with RIPOR2. Interacts with INAVA; the interaction increases upon PRR (pattern recognition receptor) stimulation and is required for cellular signaling pathway activation and cytokine secretion. Interacts with MARK2, MARK3 and MARK4. Interacts with MEFV.

The protein resides in the cytoplasm. Functionally, adapter protein implicated in the regulation of a large spectrum of both general and specialized signaling pathways. Binds to a large number of partners, usually by recognition of a phosphoserine or phosphothreonine motif. Binding generally results in the modulation of the activity of the binding partner. Negatively regulates the kinase activity of PDPK1. The protein is 14-3-3 protein theta (Ywhaq) of Mus musculus (Mouse).